The chain runs to 366 residues: NADH-quinone oxidoreductase subunit D (366 aa).

It belongs to the complex I 49 kDa subunit family. NDH-1 is composed of 14 different subunits. Subunits NuoB, C, D, E, F, and G constitute the peripheral sector of the complex.

Its subcellular location is the cell membrane. It carries out the reaction a quinone + NADH + 5 H(+)(in) = a quinol + NAD(+) + 4 H(+)(out). In terms of biological role, NDH-1 shuttles electrons from NADH, via FMN and iron-sulfur (Fe-S) centers, to quinones in the respiratory chain. The immediate electron acceptor for the enzyme in this species is believed to be a menaquinone. Couples the redox reaction to proton translocation (for every two electrons transferred, four hydrogen ions are translocated across the cytoplasmic membrane), and thus conserves the redox energy in a proton gradient. This chain is NADH-quinone oxidoreductase subunit D, found in Bacillus cereus (strain ATCC 10987 / NRS 248).